A 275-amino-acid chain; its full sequence is Large ribosomal subunit protein uL2c (275 aa).

A disordered region spans residues Thr-219–Leu-255.

The protein belongs to the universal ribosomal protein uL2 family. In terms of assembly, part of the 50S ribosomal subunit.

It is found in the plastid. Its subcellular location is the chloroplast. This chain is Large ribosomal subunit protein uL2c (rpl2), found in Trieres chinensis (Marine centric diatom).